Here is a 149-residue protein sequence, read N- to C-terminus: Nucleoside diphosphate kinase (149 aa).

Residues lysine 9, phenylalanine 57, arginine 85, threonine 91, arginine 102, and asparagine 112 each contribute to the ATP site. Histidine 115 functions as the Pros-phosphohistidine intermediate in the catalytic mechanism.

Belongs to the NDK family. Homotetramer. The cofactor is Mg(2+).

The protein resides in the cytoplasm. The catalysed reaction is a 2'-deoxyribonucleoside 5'-diphosphate + ATP = a 2'-deoxyribonucleoside 5'-triphosphate + ADP. It carries out the reaction a ribonucleoside 5'-diphosphate + ATP = a ribonucleoside 5'-triphosphate + ADP. Functionally, major role in the synthesis of nucleoside triphosphates other than ATP. The ATP gamma phosphate is transferred to the NDP beta phosphate via a ping-pong mechanism, using a phosphorylated active-site intermediate. This Staphylococcus aureus (strain Mu3 / ATCC 700698) protein is Nucleoside diphosphate kinase.